Consider the following 327-residue polypeptide: Ribose-phosphate pyrophosphokinase (327 aa).

Residues 46–48 (NGE) and 105–106 (RQ) contribute to the ATP site. Residues histidine 139 and aspartate 179 each coordinate Mg(2+). Residue lysine 203 is part of the active site. D-ribose 5-phosphate-binding positions include arginine 205, aspartate 231, and 235 to 239 (DTGGT).

This sequence belongs to the ribose-phosphate pyrophosphokinase family. Class I subfamily. Homohexamer. Requires Mg(2+) as cofactor.

The protein resides in the cytoplasm. It catalyses the reaction D-ribose 5-phosphate + ATP = 5-phospho-alpha-D-ribose 1-diphosphate + AMP + H(+). It functions in the pathway metabolic intermediate biosynthesis; 5-phospho-alpha-D-ribose 1-diphosphate biosynthesis; 5-phospho-alpha-D-ribose 1-diphosphate from D-ribose 5-phosphate (route I): step 1/1. In terms of biological role, involved in the biosynthesis of the central metabolite phospho-alpha-D-ribosyl-1-pyrophosphate (PRPP) via the transfer of pyrophosphoryl group from ATP to 1-hydroxyl of ribose-5-phosphate (Rib-5-P). This Mycobacterium leprae (strain TN) protein is Ribose-phosphate pyrophosphokinase.